The primary structure comprises 1157 residues: Voltage-dependent calcium channel subunit alpha-2/delta-2 (1157 aa).

The first 18 residues, 1–18 (MAVPARTCGASWPGPVRT), serve as a signal peptide directing secretion. Residues 1-37 (MAVPARTCGASWPGPVRTARPWPGRGPRPCPDPRGPA) are disordered. Over 19 to 1119 (ARPWPGRGPR…TEDTSDCGRG (1101 aa)) the chain is Extracellular. Pro residues predominate over residues 24–34 (GRGPRPCPDPR). The N-linked (GlcNAc...) asparagine glycan is linked to Asn205. The 179-residue stretch at 294–472 (DMVIIVDVSG…INTQEYLDVL (179 aa)) folds into the VWFA domain. Positions 300, 302, and 304 each coordinate a divalent metal cation. The short motif at 300–304 (DVSGS) is the MIDAS-like motif element. N-linked (GlcNAc...) asparagine glycans are attached at residues Asn389, Asn421, Asn510, Asn543, Asn627, and Asn864. A disulfide bridge connects residues Cys446 and Cys1104. A Cache domain is found at 488–577 (WTNVYEDALG…KPQITNFREP (90 aa)). A helical transmembrane segment spans residues 1120–1140 (ASFPPSLGVLVSLQLLLLLGL). Residues 1141 to 1157 (PPRPQPQIHSFTPSRRL) are Cytoplasmic-facing.

The protein belongs to the calcium channel subunit alpha-2/delta family. Dimer formed of alpha-2-2 and delta-2 chains; disulfide-linked. Voltage-dependent calcium channels are multisubunit complexes, consisting of alpha-1 (CACNA1), alpha-2 (CACNA2D), beta (CACNB) and delta (CACNA2D) subunits in a 1:1:1:1 ratio. Post-translationally, N-glycosylated. In terms of processing, may be proteolytically processed into subunits alpha-2-2 and delta-2 that are disulfide-linked. It is however unclear whether such cleavage really takes place in vivo and has a functional role. As to expression, in heart, it is highly expressed in atrium and at lower level in ventricle.

It localises to the membrane. Functionally, the alpha-2/delta subunit of voltage-dependent calcium channels regulates calcium current density and activation/inactivation kinetics of the calcium channel. Acts as a regulatory subunit for P/Q-type calcium channel (CACNA1A), N-type (CACNA1B), L-type (CACNA1C OR CACNA1D) and possibly T-type (CACNA1G). Overexpression induces apoptosis. This Rattus norvegicus (Rat) protein is Voltage-dependent calcium channel subunit alpha-2/delta-2 (Cacna2d2).